The primary structure comprises 568 residues: PTS system lactose-specific EIICB component (568 aa).

Residues 8–409 (IEKGKPFFEK…LVDTVIYYPF (402 aa)) form the PTS EIIC type-3 domain. 10 helical membrane passes run 30–50 (GFIS…IAYV), 65–85 (MLMT…AGTT), 103–123 (INFI…AADP), 128–148 (GFLS…AAFI), 183–203 (FAFS…VIGV), 222–242 (GYLG…VGIH), 246–266 (IVEP…AHLI), 283–303 (FIVT…FMWL), 339–359 (VFFI…KFFV), and 381–401 (IVLG…LILV). Residues 465–568 (ETNVLVLCAG…LAFVEEQFKD (104 aa)) enclose the PTS EIIB type-3 domain. C472 (phosphocysteine intermediate; for EIIB activity) is an active-site residue. C472 is subject to Phosphocysteine; by EIIA.

It localises to the cell membrane. The enzyme catalyses lactose(out) + N(pros)-phospho-L-histidyl-[protein] = lactose 6-phosphate(in) + L-histidyl-[protein]. Its function is as follows. The phosphoenolpyruvate-dependent sugar phosphotransferase system (sugar PTS), a major carbohydrate active transport system, catalyzes the phosphorylation of incoming sugar substrates concomitantly with their translocation across the cell membrane. The enzyme II LacEF PTS system is involved in lactose transport. In Streptococcus mutans serotype c (strain ATCC 700610 / UA159), this protein is PTS system lactose-specific EIICB component.